Here is a 110-residue protein sequence, read N- to C-terminus: Histone H2A.1 (110 aa).

The protein belongs to the histone H2A family. In terms of assembly, the nucleosome is a histone octamer containing two molecules each of H2A, H2B, H3 and H4 assembled in one H3-H4 heterotetramer and two H2A-H2B heterodimers. The octamer wraps approximately 147 bp of DNA. As to expression, expressed in the generative cell within the bicellular pollen. Not detected in other reproductive or vegetative tissues.

Its subcellular location is the nucleus. It is found in the chromosome. Functionally, core component of nucleosome. Nucleosomes wrap and compact DNA into chromatin, limiting DNA accessibility to the cellular machineries which require DNA as a template. Histones thereby play a central role in transcription regulation, DNA repair, DNA replication and chromosomal stability. DNA accessibility is regulated via a complex set of post-translational modifications of histones, also called histone code, and nucleosome remodeling. This chain is Histone H2A.1 (gcH2A), found in Lilium longiflorum (Trumpet lily).